Here is a 401-residue protein sequence, read N- to C-terminus: Argininosuccinate synthase (401 aa).

Residues 9-17 (AYSGGLDTS) and A35 each bind ATP. Y86 serves as a coordination point for L-citrulline. G116 provides a ligand contact to ATP. T118, N122, and D123 together coordinate L-aspartate. N122 is an L-citrulline binding site. The L-citrulline site is built by R126, S175, S184, E261, and Y273.

It belongs to the argininosuccinate synthase family. Type 1 subfamily. Homotetramer.

Its subcellular location is the cytoplasm. It carries out the reaction L-citrulline + L-aspartate + ATP = 2-(N(omega)-L-arginino)succinate + AMP + diphosphate + H(+). The protein operates within amino-acid biosynthesis; L-arginine biosynthesis; L-arginine from L-ornithine and carbamoyl phosphate: step 2/3. This Aquifex aeolicus (strain VF5) protein is Argininosuccinate synthase.